The chain runs to 362 residues: Cobalt-precorrin-5B C(1)-methyltransferase (362 aa).

It belongs to the CbiD family.

It catalyses the reaction Co-precorrin-5B + S-adenosyl-L-methionine = Co-precorrin-6A + S-adenosyl-L-homocysteine. The protein operates within cofactor biosynthesis; adenosylcobalamin biosynthesis; cob(II)yrinate a,c-diamide from sirohydrochlorin (anaerobic route): step 6/10. Catalyzes the methylation of C-1 in cobalt-precorrin-5B to form cobalt-precorrin-6A. The sequence is that of Cobalt-precorrin-5B C(1)-methyltransferase from Geobacter sulfurreducens (strain ATCC 51573 / DSM 12127 / PCA).